We begin with the raw amino-acid sequence, 415 residues long: Tyrosine--tRNA ligase (415 aa).

Residues 54 to 63 (PTGSNIHLGH) carry the 'HIGH' region motif. Positions 248-252 (KMSKS) match the 'KMSKS' region motif. An ATP-binding site is contributed by Lys-251. One can recognise an S4 RNA-binding domain in the interval 351–414 (AKAFYLFSAV…LGKKTFRRLV (64 aa)).

Belongs to the class-I aminoacyl-tRNA synthetase family. TyrS type 2 subfamily. Homodimer.

Its subcellular location is the cytoplasm. It carries out the reaction tRNA(Tyr) + L-tyrosine + ATP = L-tyrosyl-tRNA(Tyr) + AMP + diphosphate + H(+). In terms of biological role, catalyzes the attachment of tyrosine to tRNA(Tyr) in a two-step reaction: tyrosine is first activated by ATP to form Tyr-AMP and then transferred to the acceptor end of tRNA(Tyr). The sequence is that of Tyrosine--tRNA ligase from Synechococcus sp. (strain CC9605).